Here is a 131-residue protein sequence, read N- to C-terminus: Increased copper sensitivity protein 3 (131 aa).

Transmembrane regions (helical) follow at residues 35–55 (ISVL…IFFS) and 74–94 (IALT…IIAF).

The protein localises to the membrane. This Saccharomyces cerevisiae (strain ATCC 204508 / S288c) (Baker's yeast) protein is Increased copper sensitivity protein 3 (ICS3).